A 144-amino-acid chain; its full sequence is Angiogenin-4 (144 aa).

Residues 1-24 form the signal peptide; that stretch reads MTMSPCPLLLVFVLGLVVIPPTLA. The Proton acceptor role is filled by His-36. 3 disulfide bridges follow: Cys-49–Cys-103, Cys-62–Cys-114, and Cys-80–Cys-129. The Nucleolar localization signal signature appears at 54–58; it reads KERKL. Catalysis depends on His-136, which acts as the Proton donor.

This sequence belongs to the pancreatic ribonuclease family. Detected in small intestine, caecum and colon, with the highest expression in Paneth cells in the intestinal epithelium.

The protein localises to the secreted. It is found in the cytoplasmic vesicle. Its subcellular location is the secretory vesicle lumen. The protein resides in the nucleus. It localises to the nucleolus. Has bactericidal activity against E.faecalis and L.monocytogenes, but not against L.innocua and E.coli. Promotes angiogenesis (in vitro). Has low ribonuclease activity (in vitro). Promotes proliferation of melanoma cells, but not of endothelial cells or fibroblasts (in vitro). The polypeptide is Angiogenin-4 (Ang4) (Mus musculus (Mouse)).